A 272-amino-acid polypeptide reads, in one-letter code: Dioscorin DB3L (272 aa).

The signal sequence occupies residues 1–25; that stretch reads MSSSTLFHLFLLSSLLFSCLSNARP. Residues 28–263 form the Alpha-carbonic anhydrase domain; the sequence is DDFSYIEGSP…LKFRTIFFYP (236 aa). A disulfide bond links C53 and C213.

It belongs to the alpha-class carbonic anhydrase family. In terms of assembly, homodimer; disulfide-linked. Not glycosylated. In terms of tissue distribution, expressed in tuber (at protein level).

Loss of hemagglutinating activity by EDTA treatment. The activity is fully recovered by the addition of 5 mM Ca(2+) ions, but not with Mg(2+) and Mn 2(+). Hemagglutination activity is inhibited by maltose and its derivatives, with maltopentaose and maltohexaose being the best inhibitors followed by maltose and iso maltose. Not inhibited by glycoproteins. Functionally, maltose-binding lectin. No affinity is detected toward glucose. Has hemagglutinating activity against rabbit erythrocytes at 3.9 ug/ml. No carbonate dehydratase or trypsin inhibitor activity detected by measuring the hydrolysis of 4-nitrophenyl acetate or the inhibition of bovine trypsin-catalyzed hydrolysis of N-benzoyl-L-arginine ethyl ester, respectively. This Dioscorea polystachya (Chinese yam) protein is Dioscorin DB3L.